The chain runs to 652 residues: Acetyl-coenzyme A synthetase (652 aa).

Residues 190-193 (RGGR) and T310 contribute to the CoA site. ATP is bound by residues 386–388 (GEP), 410–415 (DTWWQT), D499, and R514. Residue S522 participates in CoA binding. R525 contributes to the ATP binding site. V536, H538, and V541 together coordinate Mg(2+). R583 provides a ligand contact to CoA. K608 carries the N6-acetyllysine modification.

Belongs to the ATP-dependent AMP-binding enzyme family. Requires Mg(2+) as cofactor. Post-translationally, acetylated. Deacetylation by the SIR2-homolog deacetylase activates the enzyme.

The catalysed reaction is acetate + ATP + CoA = acetyl-CoA + AMP + diphosphate. Catalyzes the conversion of acetate into acetyl-CoA (AcCoA), an essential intermediate at the junction of anabolic and catabolic pathways. AcsA undergoes a two-step reaction. In the first half reaction, AcsA combines acetate with ATP to form acetyl-adenylate (AcAMP) intermediate. In the second half reaction, it can then transfer the acetyl group from AcAMP to the sulfhydryl group of CoA, forming the product AcCoA. This chain is Acetyl-coenzyme A synthetase, found in Methylorubrum extorquens (strain CM4 / NCIMB 13688) (Methylobacterium extorquens).